Consider the following 303-residue polypeptide: Vesicle-trafficking protein SEC22c (303 aa).

Residues 1–183 (MSMILFASIV…EPAPNLRMKP (183 aa)) are Cytoplasmic-facing. A Longin domain is found at 8 to 119 (SIVRVRDGLP…YAFLEFDSVI (112 aa)). A helical membrane pass occupies residues 184-204 (VTALGVLSLVLNIMCAALNLI). Topologically, residues 205-223 (RGVHLAEHSLQVAQEEVGN) are lumenal. Residues 224–244 (ILAFFIPSVACIVQCYLYLFY) traverse the membrane as a helical segment. The Cytoplasmic portion of the chain corresponds to 245-248 (SPAR). The chain crosses the membrane as a helical span at residues 249–269 (TLKVLLMLASICLGNAYLHGL). Arg-270 is a topological domain (lumenal). A helical membrane pass occupies residues 271-291 (NTWQILFHVGVAFLSSYQILT). Residues 292-303 (RQLQERQSDYGV) are Cytoplasmic-facing.

Belongs to the synaptobrevin family.

It is found in the endoplasmic reticulum membrane. Functionally, may be involved in vesicle transport between the ER and the Golgi complex. This chain is Vesicle-trafficking protein SEC22c (Sec22c), found in Mus musculus (Mouse).